The primary structure comprises 1244 residues: Structural polyprotein (1244 aa).

Positions 1-113 (MNSVFYNPFG…GKRQRTALKF (113 aa)) are disordered. Residues 35 to 44 (GLTTQIQQLT) are compositionally biased toward polar residues. A host transcription inhibition region spans residues 35–69 (GLTTQIQQLTRAVRALVLDNATRRQRPAPRTRPRK). Residues 57–81 (RRQRPAPRTRPRKPKTQKPKPKKQN) are compositionally biased toward basic residues. The short motif at 62-103 (APRTRPRKPKTQKPKPKKQNQKPPQQQKKGKNQPQQPKKPKP) is the Nuclear localization signal element. Low complexity predominate over residues 82 to 97 (QKPPQQQKKGKNQPQQ). Residues 85–118 (PQQQKKGKNQPQQPKKPKPGKRQRTALKFEADRT) are binding to the viral RNA. Basic residues predominate over residues 99–109 (KKPKPGKRQRT). The tract at residues 103 to 117 (PGKRQRTALKFEADR) is ribosome-binding. In terms of domain architecture, Peptidase S3 spans 117-267 (RTFVGKNEDG…KTTHEDTVEW (151 aa)). The active-site Charge relay system is His-144. The Nuclear export signal signature appears at 149–159 (IDHPALAKLKF). Residues 160-165 (TKSSSY) are interaction with spike glycoprotein E2. The active-site Charge relay system is the Asp-166. The segment at 188–198 (PEVFYNWHHGA) is dimerization of the capsid protein. The active-site Charge relay system is the Ser-218. The segment at 224–228 (DNSGK) is dimerization of the capsid protein. The segment at 252-256 (KKGAA) is interaction with spike glycoprotein E2. A functions as an uncleaved signal peptide for the precursor of protein E3/E2 region spans residues 268-280 (SRAITAMCILQNV). The Extracellular segment spans residues 268-696 (SRAITAMCIL…HYYHLYPFYT (429 aa)). Asn-279 carries N-linked (GlcNAc...) asparagine; by host glycosylation. Cystine bridges form between Cys-284-Cys-290, Cys-481-Cys-595, Cys-530-Cys-555, and Cys-532-Cys-549. An N-linked (GlcNAc...) asparagine; by host glycan is attached at Asn-525. Asn-647 carries N-linked (GlcNAc...) asparagine; by host glycosylation. The helical transmembrane segment at 697-717 (VTVLSGMGLAICAGLVISILC) threads the bilayer. At 718–751 (CCKARRDCLTPYQLAPNATVPFLVTLCCCFQRTS) the chain is on the cytoplasmic side. Positions 720-724 (KARRD) are interaction with the capsid protein. S-palmitoyl cysteine; by host attachment occurs at residues Cys-725, Cys-745, and Cys-746. Cysteines 725 and 746 form a disulfide. At 752–764 (ADEFTDTMGYLWQ) the chain is on the extracellular side. The next 2 helical transmembrane spans lie at 765–785 (HSQT…ITLV) and 786–805 (RCCS…NKAD). The Extracellular portion of the chain corresponds to 806 to 1218 (AYEHTITVPN…KTSWNWITAL (413 aa)). 4 cysteine pairs are disulfide-bonded: Cys-855–Cys-920, Cys-868–Cys-900, Cys-869–Cys-902, and Cys-874–Cys-884. The E1 fusion peptide loop stretch occupies residues 890–907 (VYPFLWGGAQCFCDSENS). N-linked (GlcNAc...) asparagine; by host glycans are attached at residues Asn-945 and Asn-1051. Cystine bridges form between Cys-1065–Cys-1077, Cys-1106–Cys-1181, Cys-1111–Cys-1185, and Cys-1133–Cys-1175. The chain crosses the membrane as a helical span at residues 1219 to 1239 (MGGISSIAAIAAIVLVIALVF). At 1240–1244 (TAQHR) the chain is on the cytoplasmic side.

As to quaternary structure, homodimer. Homomultimer. Interacts with host karyopherin KPNA4; this interaction allows the nuclear import of the viral capsid protein. Interacts with spike glycoprotein E2. Interacts with host IRAK1; the interaction leads to inhibition of IRAK1-dependent signaling. In terms of assembly, the precursor of protein E3/E2 and E1 form a heterodimer shortly after synthesis. The precursor of protein E3/E2 and E1 form a heterodimer shortly after synthesis. Processing of the precursor of protein E3/E2 into E2 and E3 results in a heterodimer of the spike glycoproteins E2 and E1. Spike at virion surface are constituted of a trimer of E2-E1 heterodimers. After target cell attachment and endocytosis, E1 change conformation to form homotrimers. Interacts with 6K protein. As to quaternary structure, interacts with spike glycoprotein E1. Processing of the precursor of protein E3/E2 into E2 and E3 results in a heterodimer of the spike glycoproteins E2 and E1. Spike at virion surface are constituted of a trimer of E2-E1 heterodimers. Interacts with 6K protein. In terms of assembly, oligomer. Interacts with spike glycoprotein E1. Interacts with spike glycoprotein E2. Structural polyprotein: Specific enzymatic cleavages in vivo yield mature proteins. Capsid protein is auto-cleaved during polyprotein translation, unmasking a signal peptide at the N-terminus of the precursor of E3/E2. The remaining polyprotein is then targeted to the host endoplasmic reticulum, where host signal peptidase cleaves it into pE2, 6K and E1 proteins. pE2 is further processed to mature E3 and E2 by host furin in trans-Golgi vesicle. In terms of processing, palmitoylated via thioester bonds. These palmitoylations may induce disruption of the C-terminus transmembrane. This would result in the reorientation of E2 C-terminus from lumenal to cytoplasmic side. Post-translationally, N-glycosylated. Palmitoylated via thioester bonds.

It localises to the virion. It is found in the host cytoplasm. The protein localises to the host cell membrane. Its subcellular location is the host nucleus. The protein resides in the virion membrane. It localises to the host Golgi apparatus. It is found in the host trans-Golgi network. The protein localises to the host endoplasmic reticulum. It catalyses the reaction Autocatalytic release of the core protein from the N-terminus of the togavirus structural polyprotein by hydrolysis of a -Trp-|-Ser- bond.. Its function is as follows. Forms an icosahedral capsid with a T=4 symmetry composed of 240 copies of the capsid protein surrounded by a lipid membrane through which penetrate 80 spikes composed of trimers of E1-E2 heterodimers. The capsid protein binds to the viral RNA genome at a site adjacent to a ribosome binding site for viral genome translation following genome release. Possesses a protease activity that results in its autocatalytic cleavage from the nascent structural protein. Following its self-cleavage, the capsid protein transiently associates with ribosomes, and within several minutes the protein binds to viral RNA and rapidly assembles into icosahedric core particles. The resulting nucleocapsid eventually associates with the cytoplasmic domain of the spike glycoprotein E2 at the cell membrane, leading to budding and formation of mature virions. In case of infection, new virions attach to target cells and after clathrin-mediated endocytosis their membrane fuses with the host endosomal membrane. This leads to the release of the nucleocapsid into the cytoplasm, followed by an uncoating event necessary for the genomic RNA to become accessible. The uncoating might be triggered by the interaction of capsid proteins with ribosomes. Binding of ribosomes would release the genomic RNA since the same region is genomic RNA-binding and ribosome-binding. Specifically inhibits interleukin-1 receptor-associated kinase 1/IRAK1-dependent signaling during viral entry, representing a means by which the alphaviruses may evade innate immune detection and activation prior to viral gene expression. Provides the signal sequence for the translocation of the precursor of protein E3/E2 to the host endoplasmic reticulum. Furin-cleaved E3 remains associated with spike glycoprotein E1 and mediates pH protection of the latter during the transport via the secretory pathway. After virion release from the host cell, the assembly protein E3 is gradually released in the extracellular space. In terms of biological role, plays a role in viral attachment to target host cell, by binding to the cell receptor. Synthesized as a p62 precursor which is processed by furin at the cell membrane just before virion budding, giving rise to E2-E1 heterodimer. The p62-E1 heterodimer is stable, whereas E2-E1 is unstable and dissociate at low pH. p62 is processed at the last step, presumably to avoid E1 fusion activation before its final export to cell surface. E2 C-terminus contains a transitory transmembrane that would be disrupted by palmitoylation, resulting in reorientation of the C-terminal tail from lumenal to cytoplasmic side. This step is critical since E2 C-terminus is involved in budding by interacting with capsid proteins. This release of E2 C-terminus in cytoplasm occurs lately in protein export, and precludes premature assembly of particles at the endoplasmic reticulum membrane. Functionally, acts as a viroporin that participates in virus glycoprotein processing and transport to the plasma membrane, cell permeabilization and budding of viral particles. Disrupts the calcium homeostasis of the cell, probably at the endoplasmic reticulum level. This leads to cytoplasmic calcium elevation. Because of its lipophilic properties, the 6K protein is postulated to influence the selection of lipids that interact with the transmembrane domains of the glycoproteins, which, in turn, affects the deformability of the bilayer required for the extreme curvature that occurs as budding proceeds. Present in low amount in virions, about 3% compared to viral glycoproteins. Its function is as follows. Class II viral fusion protein. Fusion activity is inactive as long as E1 is bound to E2 in mature virion. After virus attachment to target cell and endocytosis, acidification of the endosome induce dissociation of E1/E2 heterodimer and concomitant trimerization of the E1 subunits. This E1 trimer is fusion active, and promotes release of viral nucleocapsid in cytoplasm after endosome and viral membrane fusion. Efficient fusion requires the presence of cholesterol and sphingolipid in the target membrane. In Aedes (AURAV), this protein is Structural polyprotein.